Reading from the N-terminus, the 293-residue chain is Elongation factor Ts (293 aa).

Residues 80 to 83 (TDFV) form an involved in Mg(2+) ion dislocation from EF-Tu region.

The protein belongs to the EF-Ts family.

It localises to the cytoplasm. Its function is as follows. Associates with the EF-Tu.GDP complex and induces the exchange of GDP to GTP. It remains bound to the aminoacyl-tRNA.EF-Tu.GTP complex up to the GTP hydrolysis stage on the ribosome. This is Elongation factor Ts from Burkholderia ambifaria (strain MC40-6).